Reading from the N-terminus, the 149-residue chain is MSTQSRILVLNGPNLNLLGLREPAHYGSQNLEQIVNALTTQADALGVEIEHLQSNREYELIEAIHNAYQRIDFIIINPAAFTHTSVALRDALLGVDIPFIEVHLSNVHAREPFRHHSYLSDKAVGVICGLGADGYEFALNAAVKRLRSN.

Tyr-26 serves as the catalytic Proton acceptor. The substrate site is built by Asn-77, His-83, and Asp-90. His-103 (proton donor) is an active-site residue. Residues 104-105 (LS) and Arg-114 contribute to the substrate site.

Belongs to the type-II 3-dehydroquinase family. In terms of assembly, homododecamer.

The enzyme catalyses 3-dehydroquinate = 3-dehydroshikimate + H2O. It functions in the pathway metabolic intermediate biosynthesis; chorismate biosynthesis; chorismate from D-erythrose 4-phosphate and phosphoenolpyruvate: step 3/7. Functionally, catalyzes a trans-dehydration via an enolate intermediate. This chain is 3-dehydroquinate dehydratase, found in Aliivibrio fischeri (strain MJ11) (Vibrio fischeri).